A 25-amino-acid chain; its full sequence is Ocellatin-F1 (25 aa).

Leucine amide is present on leucine 25.

The protein belongs to the frog skin active peptide (FSAP) family. Ocellatin subfamily. In terms of tissue distribution, expressed by the skin glands.

The protein localises to the secreted. Functionally, antibacterial peptide that inhibits reference strains of both Gram-negative bacteria (E.coli, P.aeruginosa, E.cloacae, K.pneumoniae, and A.actinomycetemcomitans) and Gram-positive bacteria (S.aureus) with relatively low potencies (MIC=25-400 uM). Shows antifungal activity against C.lusitaniae (MIC=50.25 uM), but no activity against C.albicans. In the presence of an alkaloid (bufotenine), inhibits cellular infection by the rabies virus. The peptide shows very low hemolytic activity against rabbit erythrocytes. The low amphipathicity of alpha-helices demonstrated by wheel projection as well as the low cationicity may explain the low antibacterial and hemolytic potencies. In Leptodactylus labyrinthicus (Labyrinth frog), this protein is Ocellatin-F1.